A 273-amino-acid polypeptide reads, in one-letter code: Ribosomal RNA small subunit methyltransferase A (273 aa).

S-adenosyl-L-methionine contacts are provided by Asn-20, Leu-22, Gly-47, Glu-68, Asp-90, and Asn-110.

The protein belongs to the class I-like SAM-binding methyltransferase superfamily. rRNA adenine N(6)-methyltransferase family. RsmA subfamily.

The protein resides in the cytoplasm. It catalyses the reaction adenosine(1518)/adenosine(1519) in 16S rRNA + 4 S-adenosyl-L-methionine = N(6)-dimethyladenosine(1518)/N(6)-dimethyladenosine(1519) in 16S rRNA + 4 S-adenosyl-L-homocysteine + 4 H(+). Functionally, specifically dimethylates two adjacent adenosines (A1518 and A1519) in the loop of a conserved hairpin near the 3'-end of 16S rRNA in the 30S particle. May play a critical role in biogenesis of 30S subunits. The polypeptide is Ribosomal RNA small subunit methyltransferase A (Chlorobium luteolum (strain DSM 273 / BCRC 81028 / 2530) (Pelodictyon luteolum)).